Consider the following 574-residue polypeptide: Septation ring formation regulator EzrA (574 aa).

Residues 1 to 7 are Extracellular-facing; sequence MSSGLIL. The helical transmembrane segment at 8-26 threads the bilayer; that stretch reads LIVAIVLLVIIAYLVGVII. At 27 to 574 the chain is on the cytoplasmic side; the sequence is RKRNDTLITS…YEKTRERIRF (548 aa). 4 coiled-coil regions span residues 102 to 131, 161 to 190, 276 to 379, and 459 to 493; these read NFIR…REAL, ENED…FVAL, VTLD…QQEK, and QLEA…NLEE.

The protein belongs to the EzrA family.

Its subcellular location is the cell membrane. Functionally, negative regulator of FtsZ ring formation; modulates the frequency and position of FtsZ ring formation. Inhibits FtsZ ring formation at polar sites. Interacts either with FtsZ or with one of its binding partners to promote depolymerization. The sequence is that of Septation ring formation regulator EzrA from Streptococcus equi subsp. zooepidemicus (strain MGCS10565).